Reading from the N-terminus, the 329-residue chain is Malate dehydrogenase (329 aa).

An NAD(+)-binding site is contributed by 12-18 (GAAGQIG). Arg-93 and Arg-99 together coordinate substrate. NAD(+) is bound by residues Asn-106, Gln-113, and 130 to 132 (TGN). Residues Asn-132 and Arg-163 each contribute to the substrate site. Catalysis depends on His-188, which acts as the Proton acceptor.

The protein belongs to the LDH/MDH superfamily. MDH type 2 family.

The catalysed reaction is (S)-malate + NAD(+) = oxaloacetate + NADH + H(+). Catalyzes the reversible oxidation of malate to oxaloacetate. In Mycobacterium leprae (strain TN), this protein is Malate dehydrogenase.